The sequence spans 309 residues: Porphobilinogen deaminase (309 aa).

Cys-242 carries the S-(dipyrrolylmethanemethyl)cysteine modification.

This sequence belongs to the HMBS family. Monomer. Dipyrromethane is required as a cofactor.

It catalyses the reaction 4 porphobilinogen + H2O = hydroxymethylbilane + 4 NH4(+). It participates in porphyrin-containing compound metabolism; protoporphyrin-IX biosynthesis; coproporphyrinogen-III from 5-aminolevulinate: step 2/4. Functionally, tetrapolymerization of the monopyrrole PBG into the hydroxymethylbilane pre-uroporphyrinogen in several discrete steps. The polypeptide is Porphobilinogen deaminase (Shewanella woodyi (strain ATCC 51908 / MS32)).